Here is a 163-residue protein sequence, read N- to C-terminus: Glyoxalase domain-containing protein 5 (163 aa).

One can recognise a VOC domain in the interval 41 to 161 (HLDHLVLTVR…DDNLIEVSNY (121 aa)).

The protein belongs to the glyoxalase I family.

The chain is Glyoxalase domain-containing protein 5 (glod5) from Danio rerio (Zebrafish).